The following is a 434-amino-acid chain: Trigger factor (434 aa).

Positions 161–246 (EDRATIDFSG…LKKVEERELP (86 aa)) constitute a PPIase FKBP-type domain.

Belongs to the FKBP-type PPIase family. Tig subfamily.

It localises to the cytoplasm. The catalysed reaction is [protein]-peptidylproline (omega=180) = [protein]-peptidylproline (omega=0). Involved in protein export. Acts as a chaperone by maintaining the newly synthesized protein in an open conformation. Functions as a peptidyl-prolyl cis-trans isomerase. This is Trigger factor from Erwinia tasmaniensis (strain DSM 17950 / CFBP 7177 / CIP 109463 / NCPPB 4357 / Et1/99).